A 166-amino-acid chain; its full sequence is Large ribosomal subunit protein uL10 (166 aa).

Belongs to the universal ribosomal protein uL10 family. Part of the ribosomal stalk of the 50S ribosomal subunit. The N-terminus interacts with L11 and the large rRNA to form the base of the stalk. The C-terminus forms an elongated spine to which L12 dimers bind in a sequential fashion forming a multimeric L10(L12)X complex.

Functionally, forms part of the ribosomal stalk, playing a central role in the interaction of the ribosome with GTP-bound translation factors. The sequence is that of Large ribosomal subunit protein uL10 from Bacillus cereus (strain 03BB102).